We begin with the raw amino-acid sequence, 555 residues long: MTTSSPPQAVTTLTESIKNLLESNFCHVVVKGELSNVSLQPSGHLYFGIKDSRSFLNGAFFHFKSKYFDRRPKDGDSVIIHGKLTVYAPRGQYQIVAHALVYAGEGDLLQKFEETKKRLAAEGYFALEKKQTLPNIPQSIGVITSPTGAVIQDILRVLSRRCYQYKILIYPVTVQGATAAKEISRAIEEMNKENLADVLILARGGGSIEDLWAFNEEIVVKAIDASSIPIISAIGHETDYTLCDFAADVRAPTPSAAAEIVCQSSEQQIQVFKSYLRYLNAHSQQLLSGKIKQIQQWKRYLDHVDFFRSAHQSLDYLCLSVERSIQTKLSQYKQRYMQYARWLQSDVLQRMTYRLHDLWKMIVQAFHNRLTAAKHLCMQKKKNLTFHNTQQFIQKLDLWKQQLHRALTQRLGYCSQSLTHQQTLLKHFTIKLNQQFTKGKHTLNLLQKRLTRTFANTVDEHRENYVRSRENLIFSLHHLVERNREKYYTLSKQLTLLNPKNVFKRGYAMLFDFNENFAIISAKSLHKHSCVRVRLQDGEATLTVTDIQNFETQES.

Belongs to the XseA family. In terms of assembly, heterooligomer composed of large and small subunits.

The protein resides in the cytoplasm. The catalysed reaction is Exonucleolytic cleavage in either 5'- to 3'- or 3'- to 5'-direction to yield nucleoside 5'-phosphates.. Functionally, bidirectionally degrades single-stranded DNA into large acid-insoluble oligonucleotides, which are then degraded further into small acid-soluble oligonucleotides. The protein is Exodeoxyribonuclease 7 large subunit of Chlamydia felis (strain Fe/C-56) (Chlamydophila felis).